Consider the following 657-residue polypeptide: Cyclic-di-AMP phosphodiesterase PdeA (657 aa).

The next 2 helical transmembrane spans lie at 13 to 35 (PLYG…SWWL) and 37 to 53 (ALVV…MFYF). A PAS-like region spans residues 74 to 137 (RSEEEALVEM…ITGNDEKGIM (64 aa)). The 129-residue stretch at 175-303 (NKSVFAVIFL…GGDQVVIKQP (129 aa)) folds into the GGDEF domain. Residues 342 to 498 (VFVMGHRYPD…IEATALLSGI (157 aa)) form a DHH region. His-347, Asp-351, Asp-353, Asp-422, His-446, and Asp-501 together coordinate Mn(2+). A DHHA1 region spans residues 592–645 (VITLRPDKLIGISARSLGQINVQVIMEKLGGGGHLSNAATQLKDVTIAEAEKQL).

The protein belongs to the GdpP/PdeA phosphodiesterase family. Heme b is required as a cofactor. Requires Mn(2+) as cofactor.

The protein localises to the cell membrane. The catalysed reaction is 3',3'-c-di-AMP + H2O = 5'-O-phosphonoadenylyl-(3'-&gt;5')-adenosine + H(+). Has phosphodiesterase (PDE) activity against cyclic-di-AMP (c-di-AMP). Overexpression decreases export of c-di-AMP, leads to slightly increased susceptibility to the antibiotic cefuroxime and somewhat slower growth in macrophages. There are at least 2 PDEs for c-di-AMP in this bacteria (this one and pgpH); this may be the major PDE for intracellular growth in host macrophages. During host infection c-di-AMP is secreted into the host cytoplasm which leads to interferon-beta production and secretion by the host. c-di-AMP is a second messenger that mediates growth, cell wall stability and virulence. May monitor cellular heme or NO levels. This is Cyclic-di-AMP phosphodiesterase PdeA from Listeria monocytogenes serotype 1/2a (strain 10403S).